The sequence spans 247 residues: Acetate transporter protein patA (247 aa).

Asparagine 20 carries an N-linked (GlcNAc...) asparagine glycan. The next 6 helical transmembrane spans lie at 37–57 (PPIT…AIAF), 71–91 (AITN…LVLV), 106–126 (VFGG…PAFG), 141–161 (ALGY…IAAM), 169–189 (AMLG…FAMA), and 202–222 (AAGA…AHLM).

Belongs to the acetate uptake transporter (AceTr) (TC 2.A.96) family.

The protein localises to the endoplasmic reticulum membrane. Its pathway is mycotoxin biosynthesis; patulin biosynthesis. In terms of biological role, acetate transporter protein; part of the gene cluster that mediates the biosynthesis of patulin, an acetate-derived tetraketide mycotoxin produced by several fungal species that shows antimicrobial properties against several bacteria. May be involved in the uptake of acetate, a substrate for the synthesis of 6-methylsalicylic acid by the polyketide synthase patK. The chain is Acetate transporter protein patA from Aspergillus clavatus (strain ATCC 1007 / CBS 513.65 / DSM 816 / NCTC 3887 / NRRL 1 / QM 1276 / 107).